A 93-amino-acid chain; its full sequence is Small ribosomal subunit protein uS19 (93 aa).

Belongs to the universal ribosomal protein uS19 family.

Its function is as follows. Protein S19 forms a complex with S13 that binds strongly to the 16S ribosomal RNA. This Thermoanaerobacter pseudethanolicus (strain ATCC 33223 / 39E) (Clostridium thermohydrosulfuricum) protein is Small ribosomal subunit protein uS19.